The chain runs to 148 residues: Urease accessory protein UreE (148 aa).

Belongs to the UreE family.

Its subcellular location is the cytoplasm. In terms of biological role, involved in urease metallocenter assembly. Binds nickel. Probably functions as a nickel donor during metallocenter assembly. The chain is Urease accessory protein UreE from Aliarcobacter butzleri (strain RM4018) (Arcobacter butzleri).